The primary structure comprises 414 residues: 3-phosphoshikimate 1-carboxyvinyltransferase (414 aa).

Residues Lys20, Ser21, and Arg25 each contribute to the 3-phosphoshikimate site. Lys20 contributes to the phosphoenolpyruvate binding site. The phosphoenolpyruvate site is built by Gly85 and Arg113. 3-phosphoshikimate is bound by residues Ser154, Ser155, Gln156, Ser181, Asp296, and Lys323. Gln156 contacts phosphoenolpyruvate. Catalysis depends on Asp296, which acts as the Proton acceptor. The phosphoenolpyruvate site is built by Arg327, Arg371, and Lys395.

It belongs to the EPSP synthase family. Monomer.

The protein resides in the cytoplasm. The catalysed reaction is 3-phosphoshikimate + phosphoenolpyruvate = 5-O-(1-carboxyvinyl)-3-phosphoshikimate + phosphate. It participates in metabolic intermediate biosynthesis; chorismate biosynthesis. Functionally, catalyzes the transfer of the enolpyruvyl moiety of phosphoenolpyruvate (PEP) to the 5-hydroxyl of shikimate-3-phosphate (S3P) to produce enolpyruvyl shikimate-3-phosphate and inorganic phosphate. In Saccharolobus islandicus (strain M.14.25 / Kamchatka #1) (Sulfolobus islandicus), this protein is 3-phosphoshikimate 1-carboxyvinyltransferase.